Consider the following 845-residue polypeptide: Krueppel homolog 1 (845 aa).

Residues 141–164 (QKQQQQQQHESITNAAPTAAPSAQ) are disordered. 8 consecutive C2H2-type zinc fingers follow at residues 194–216 (FKCD…TKSH), 271–293 (YQCN…YRTH), 299–321 (FECE…RRIH), 327–349 (YKCD…MRIH), 355–377 (HKCS…MRTH), 383–407 (YKCP…SRTH), 413–435 (YHCD…RVQH), and 441–463 (YKCT…IKGH). Disordered stretches follow at residues 469–610 (DDEA…VQGQ) and 757–845 (GLRS…AKAS). Composition is skewed to low complexity over residues 474 to 491 (AAAA…SAGS), 498 to 508 (SSNSESSNHSP), and 532 to 559 (ATLS…SSMA). A compositionally biased stretch (polar residues) spans 582-591 (SGVSSAQPAH). Positions 759-775 (RSSTESPERSSSPESDS) are enriched in low complexity. Residues 796–809 (NKGDDGQVDSEKAS) are compositionally biased toward basic and acidic residues. The span at 810–823 (GDGTSAAGGAASVG) shows a compositional bias: low complexity.

The protein belongs to the krueppel C2H2-type zinc-finger protein family.

Plays a general role in the hierarchies of gene expression leading to metamorphosis. The protein is Krueppel homolog 1 (Kr-h1) of Drosophila melanogaster (Fruit fly).